The chain runs to 360 residues: Aminomethyltransferase (360 aa).

The protein belongs to the GcvT family. The glycine cleavage system is composed of four proteins: P, T, L and H.

The enzyme catalyses N(6)-[(R)-S(8)-aminomethyldihydrolipoyl]-L-lysyl-[protein] + (6S)-5,6,7,8-tetrahydrofolate = N(6)-[(R)-dihydrolipoyl]-L-lysyl-[protein] + (6R)-5,10-methylene-5,6,7,8-tetrahydrofolate + NH4(+). In terms of biological role, the glycine cleavage system catalyzes the degradation of glycine. The chain is Aminomethyltransferase from Bdellovibrio bacteriovorus (strain ATCC 15356 / DSM 50701 / NCIMB 9529 / HD100).